Reading from the N-terminus, the 448-residue chain is Maintenance of mitochondrial morphology protein 1 (448 aa).

Residues 1–74 lie on the Lumenal side of the membrane; the sequence is MTESVIYSGT…LNHTWSFTQG (74 aa). The helical transmembrane segment at 75-95 threads the bilayer; the sequence is LVVGQLSVIVVVAIFIKFFVF. Topologically, residues 96 to 448 are cytoplasmic; the sequence is ADSSATTTTT…IVDKTEEASI (353 aa). Disordered stretches follow at residues 119-144 and 303-357; these read RNKNVRGTSNEDKDPNNNKEDDLNSP and LQNV…SQED. The segment covering 127–140 has biased composition (basic and acidic residues); the sequence is SNEDKDPNNNKEDD. Residues 164 to 419 form the SMP-LTD domain; that stretch reads SPESLDWFNV…EPRFQVVKVP (256 aa). Low complexity predominate over residues 313–332; sequence PSNEPNSQNQTQQPTPVNNS. Basic and acidic residues predominate over residues 345 to 356; it reads ETKHSKAKRSQE.

This sequence belongs to the MMM1 family. As to quaternary structure, homodimer. Component of the ER-mitochondria encounter structure (ERMES) or MDM complex, composed of MMM1, MDM10, MDM12 and MDM34. An MMM1 homodimer associates with one molecule of MDM12 on each side in a pairwise head-to-tail manner, and the SMP-LTD domains of MMM1 and MDM12 generate a continuous hydrophobic tunnel for phospholipid trafficking.

The protein resides in the endoplasmic reticulum membrane. In terms of biological role, component of the ERMES/MDM complex, which serves as a molecular tether to connect the endoplasmic reticulum (ER) and mitochondria. Components of this complex are involved in the control of mitochondrial shape and protein biogenesis, and function in nonvesicular lipid trafficking between the ER and mitochondria. The MDM12-MMM1 subcomplex functions in the major beta-barrel assembly pathway that is responsible for biogenesis of all outer membrane beta-barrel proteins, and acts in a late step after the SAM complex. The MDM10-MDM12-MMM1 subcomplex further acts in the TOM40-specific pathway after the action of the MDM12-MMM1 complex. Essential for establishing and maintaining the structure of mitochondria and maintenance of mtDNA nucleoids. This is Maintenance of mitochondrial morphology protein 1 from Debaryomyces hansenii (strain ATCC 36239 / CBS 767 / BCRC 21394 / JCM 1990 / NBRC 0083 / IGC 2968) (Yeast).